The chain runs to 537 residues: Cytochrome P450 monooxygenase yanC (537 aa).

Residues 1–21 form the signal peptide; that stretch reads MALVHLTALAACGLLLVILRA. Cysteine 449 contributes to the heme binding site.

Belongs to the cytochrome P450 family. Heme is required as a cofactor.

The protein operates within secondary metabolite biosynthesis; terpenoid biosynthesis. Cytochrome P450 monooxygenase; part of the gene cluster that mediates the biosynthesis of yanuthone D, a fungal isoprenoid epoxycyclohexenone that acts as an antibiotic against fungi and bacteria. The first step of the pathway is the synthesis of 6-methylsalicylic acid (6-MSA) by the polyketide synthase yanA. 6-MSA is then converted to m-cresol by the decarboxylase yanB. The cytochrome P450 monooxygenase yanC then catalyzes the oxidation of m-cresol to toluquinol. Epoxidation of toluquinol is then performed by the short chain dehydrogenase yanD, with the help of yanE, and a further prenylation by yanG leads to 7-deacetoxyyanuthone A. The next step is the hydroxylation of C-22 of 7-deacetoxyyanuthone A by the cytochrome P450 monooxygenase yanH to yield 22-deacetylyanuthone A. O-Mevalon transferase yanI then attaches mevalon to the hydroxyl group of 22-deacetylyanuthone A to produce yanuthone E. Finally, the FAD-dependent monooxygenase yanF oxidizes the hydroxyl group at C15 of yanuthone E to form yanuthone D. Furthermore, several branching points in the pathway lead to the production of yanuthones F and G from 7-deacetoxyyanuthone A; yanuthones H and I from 22-deacetylyanuthone A; and yanuthone J from yanuthone E. YanC is also involved in the synthesis of yanuthone X1 which does not have 6-methylsalicylic acid (6-MSA) as precursor. In Aspergillus niger (strain ATCC 1015 / CBS 113.46 / FGSC A1144 / LSHB Ac4 / NCTC 3858a / NRRL 328 / USDA 3528.7), this protein is Cytochrome P450 monooxygenase yanC.